The primary structure comprises 575 residues: Carboxylesterase 5A (575 aa).

Positions 1 to 28 are cleaved as a signal peptide; that stretch reads MSGDWVRPGQALIWVIWIFGAIIEGSVT. A disulfide bridge links Cys94 with Cys121. N-linked (GlcNAc...) asparagine glycosylation is present at Asn134. Ser226 serves as the catalytic Acyl-ester intermediate. Cys280 and Cys291 are disulfide-bonded. N-linked (GlcNAc...) asparagine glycosylation occurs at Asn281. Glu345 functions as the Charge relay system in the catalytic mechanism. Asn363 carries an N-linked (GlcNAc...) asparagine glycan. Catalysis depends on His454, which acts as the Charge relay system. Asn524 carries an N-linked (GlcNAc...) asparagine glycan.

The protein belongs to the type-B carboxylesterase/lipase family. Post-translationally, N-glycosylated.

It is found in the secreted. It catalyses the reaction a carboxylic ester + H2O = an alcohol + a carboxylate + H(+). Functionally, involved in the detoxification of xenobiotics and in the activation of ester and amide prodrugs. The sequence is that of Carboxylesterase 5A (Ces5a) from Mus musculus (Mouse).